A 173-amino-acid polypeptide reads, in one-letter code: Putative C-type lectin protein FPV198 (173 aa).

Residues 50 to 169 (GMSGWVQINN…CNKKHTGICF (120 aa)) enclose the C-type lectin domain.

In Vertebrata (FPV), this protein is Putative C-type lectin protein FPV198.